The sequence spans 851 residues: Protein translocase subunit SecA (851 aa).

Residues Gln-88, 106–110 (GEGKT), and Asp-496 each bind ATP. Zn(2+) contacts are provided by Cys-828, Cys-830, Cys-839, and His-840.

Belongs to the SecA family. As to quaternary structure, monomer and homodimer. Part of the essential Sec protein translocation apparatus which comprises SecA, SecYEG and auxiliary proteins SecDF-YajC and YidC. It depends on Zn(2+) as a cofactor.

The protein resides in the cell inner membrane. It is found in the cytoplasm. The enzyme catalyses ATP + H2O + cellular proteinSide 1 = ADP + phosphate + cellular proteinSide 2.. In terms of biological role, part of the Sec protein translocase complex. Interacts with the SecYEG preprotein conducting channel. Has a central role in coupling the hydrolysis of ATP to the transfer of proteins into and across the cell membrane, serving as an ATP-driven molecular motor driving the stepwise translocation of polypeptide chains across the membrane. This chain is Protein translocase subunit SecA, found in Helicobacter hepaticus (strain ATCC 51449 / 3B1).